The following is a 510-amino-acid chain: Lysine--tRNA ligase (510 aa).

Mg(2+)-binding residues include Glu420 and Glu427.

Belongs to the class-II aminoacyl-tRNA synthetase family. In terms of assembly, homodimer. Mg(2+) is required as a cofactor.

The protein resides in the cytoplasm. It catalyses the reaction tRNA(Lys) + L-lysine + ATP = L-lysyl-tRNA(Lys) + AMP + diphosphate. This is Lysine--tRNA ligase from Vibrio vulnificus (strain YJ016).